Here is a 168-residue protein sequence, read N- to C-terminus: Ecotin (168 aa).

An N-terminal signal peptide occupies residues 1–21; sequence MKRLSIAITSLLMAASASTIA. A disulfide bridge links cysteine 76 with cysteine 113.

The protein belongs to the protease inhibitor I11 (ecotin) family. Homodimer.

The protein resides in the periplasm. Functionally, general inhibitor of pancreatic serine proteases: inhibits chymotrypsin, trypsin, elastases, factor X, kallikrein as well as a variety of other proteases. This chain is Ecotin, found in Yersinia enterocolitica serotype O:8 / biotype 1B (strain NCTC 13174 / 8081).